The chain runs to 572 residues: Neuronal acetylcholine receptor subunit alpha-9-I (572 aa).

Positions 1–19 (MKTVVLLTWISCWIDVCTS) are cleaved as a signal peptide. At 20-232 (AQGRYAQKLL…YTLHLKRRSL (213 aa)) the chain is on the extracellular side. The N-linked (GlcNAc...) asparagine glycan is linked to Asn-51. The cysteines at positions 149 and 163 are disulfide-linked. A glycan (N-linked (GlcNAc...) asparagine) is linked at Asn-164. Cys-213 and Cys-214 are oxidised to a cystine. A run of 3 helical transmembrane segments spans residues 233 to 253 (FYIFNLLLPCFLISFLAPLGF), 263 to 283 (VSLGVTVLLALTVFQLMVAES), and 297 to 317 (YIATMTMITASTSLTIFIMNI). Over 318-550 (HFCGAEAKPV…WKKVAKVMDR (233 aa)) the chain is Cytoplasmic. The disordered stretch occupies residues 405-458 (GHLQNHHSTHQNHLDNCRYANGGHRDDHYSNRSNQNHHSNRSQTSKGEGGEEKR). Over residues 435–447 (NRSNQNHHSNRSQ) the composition is skewed to low complexity. The helical transmembrane segment at 551-571 (FFMWIFFIMVFLMSILIIGKA) threads the bilayer.

The protein belongs to the ligand-gated ion channel (TC 1.A.9) family. Acetylcholine receptor (TC 1.A.9.1) subfamily. In terms of tissue distribution, expressed in the liver, olfactory mucosa, pituitary gland, hair cells of the saccule and spleen.

The protein resides in the postsynaptic cell membrane. The protein localises to the cell membrane. The protein is Neuronal acetylcholine receptor subunit alpha-9-I (nachra9) of Oncorhynchus mykiss (Rainbow trout).